A 266-amino-acid chain; its full sequence is GTP cyclohydrolase FolE2 (266 aa).

It belongs to the GTP cyclohydrolase IV family.

It carries out the reaction GTP + H2O = 7,8-dihydroneopterin 3'-triphosphate + formate + H(+). The protein operates within cofactor biosynthesis; 7,8-dihydroneopterin triphosphate biosynthesis; 7,8-dihydroneopterin triphosphate from GTP: step 1/1. Functionally, converts GTP to 7,8-dihydroneopterin triphosphate. This chain is GTP cyclohydrolase FolE2, found in Methylobacillus flagellatus (strain ATCC 51484 / DSM 6875 / VKM B-1610 / KT).